We begin with the raw amino-acid sequence, 156 residues long: MSRRSTTKKKLALPDPIYNSRLVNMLTVRILKEGKKHLAQRIIYNAFDIIKQRTGEDAILVFESAIKKVTPLVEVKARRIGGSTYQVPMEVRAFRGTNLALRWITKYARERAGKSMSMKLANEIMDAANETGSSIRKREEIHRMAEANKAFAHYRF.

It belongs to the universal ribosomal protein uS7 family. In terms of assembly, part of the 30S ribosomal subunit.

It is found in the plastid. The protein localises to the chloroplast. Functionally, one of the primary rRNA binding proteins, it binds directly to 16S rRNA where it nucleates assembly of the head domain of the 30S subunit. The chain is Small ribosomal subunit protein uS7c (rps7) from Guillardia theta (Cryptophyte).